The primary structure comprises 120 residues: Large ribosomal subunit protein bL19 (120 aa).

The protein belongs to the bacterial ribosomal protein bL19 family.

In terms of biological role, this protein is located at the 30S-50S ribosomal subunit interface and may play a role in the structure and function of the aminoacyl-tRNA binding site. The polypeptide is Large ribosomal subunit protein bL19 (Kocuria rhizophila (strain ATCC 9341 / DSM 348 / NBRC 103217 / DC2201)).